We begin with the raw amino-acid sequence, 544 residues long: Cytochrome P450 monooxygenase notG' (544 aa).

An N-terminal signal peptide occupies residues 1–22; that stretch reads MELPFSAMSLLYLLVGIAGVIS. 2 helical membrane-spanning segments follow: residues 42-62 and 66-86; these read WYTL…GLPL and AKAT…SLLL. Residues asparagine 226 and asparagine 404 are each glycosylated (N-linked (GlcNAc...) asparagine). Cysteine 487 lines the heme pocket.

It belongs to the cytochrome P450 family. Heme serves as cofactor.

The protein resides in the membrane. It functions in the pathway alkaloid biosynthesis. Cytochrome P450 monooxygenase; part of the gene cluster that mediates the biosynthesis of notoamide, a fungal indole alkaloid that belongs to a family of natural products containing a characteristic bicyclo[2.2.2]diazaoctane core. The first step of notoamide biosynthesis involves coupling of L-proline and L-tryptophan by the bimodular NRPS notE', to produce cyclo-L-tryptophan-L-proline called brevianamide F. The reverse prenyltransferase notF' then acts as a deoxybrevianamide E synthase and converts brevianamide F to deoxybrevianamide E via reverse prenylation at C-2 of the indole ring leading to the bicyclo[2.2.2]diazaoctane core. Deoxybrevianamide E is further hydroxylated at C-6 of the indole ring, likely catalyzed by the cytochrome P450 monooxygenase notG', to yield 6-hydroxy-deoxybrevianamide E. 6-hydroxy-deoxybrevianamide E is a specific substrate of the prenyltransferase notC' for normal prenylation at C-7 to produce 6-hydroxy-7-prenyl-deoxybrevianamide, also called notoamide S. As the proposed pivotal branching point in notoamide biosynthesis, notoamide S can be diverted to notoamide E through an oxidative pyran ring closure putatively catalyzed by either notH' cytochrome P450 monooxygenase or the notD' FAD-linked oxidoreductase. This step would be followed by an indole 2,3-epoxidation-initiated pinacol-like rearrangement catalyzed by the notB' FAD-dependent monooxygenase leading to the formation of notoamide C and notoamide D. On the other hand notoamide S is converted to notoamide T by notH' (or notD'), a bifunctional oxidase that also functions as the intramolecular Diels-Alderase responsible for generation of (-)-notoamide T. To generate antipodal (+)-notoaminide T, notH (or notD) in Aspergillus strain MF297-2 is expected to catalyze a Diels-Alder reaction leading to the opposite stereochemistry. The remaining oxidoreductase notD' (or notH') likely catalyzes the oxidative pyran ring formation to yield (-)-stephacidin A. The FAD-dependent monooxygenase notI' is highly similar to notB' and is predicted to catalyze a similar conversion from (-)-stephacidin A to (+)-notoamide B via the 2,3-epoxidation of (-)-stephacidin A followed by a pinacol-type rearrangement. Finally, it remains unclear which enzyme could be responsible for the final hydroxylation steps leading to notoamide A and sclerotiamide. This Aspergillus versicolor protein is Cytochrome P450 monooxygenase notG'.